The following is a 366-amino-acid chain: Aminomethyltransferase (366 aa).

The protein belongs to the GcvT family. The glycine cleavage system is composed of four proteins: P, T, L and H.

It catalyses the reaction N(6)-[(R)-S(8)-aminomethyldihydrolipoyl]-L-lysyl-[protein] + (6S)-5,6,7,8-tetrahydrofolate = N(6)-[(R)-dihydrolipoyl]-L-lysyl-[protein] + (6R)-5,10-methylene-5,6,7,8-tetrahydrofolate + NH4(+). The glycine cleavage system catalyzes the degradation of glycine. This Bordetella avium (strain 197N) protein is Aminomethyltransferase.